The following is a 193-amino-acid chain: Glycerol-3-phosphate acyltransferase (193 aa).

Helical transmembrane passes span 4 to 24 (LALI…AVLI), 56 to 76 (GLVL…GYFL), 80 to 100 (PLLL…PLFF), 116 to 136 (APIG…IVLI), and 152 to 174 (PLFT…CLIV).

Belongs to the PlsY family. Probably interacts with PlsX.

The protein localises to the cell inner membrane. It catalyses the reaction an acyl phosphate + sn-glycerol 3-phosphate = a 1-acyl-sn-glycero-3-phosphate + phosphate. It functions in the pathway lipid metabolism; phospholipid metabolism. Its function is as follows. Catalyzes the transfer of an acyl group from acyl-phosphate (acyl-PO(4)) to glycerol-3-phosphate (G3P) to form lysophosphatidic acid (LPA). This enzyme utilizes acyl-phosphate as fatty acyl donor, but not acyl-CoA or acyl-ACP. The polypeptide is Glycerol-3-phosphate acyltransferase (Aliivibrio salmonicida (strain LFI1238) (Vibrio salmonicida (strain LFI1238))).